Here is a 513-residue protein sequence, read N- to C-terminus: Light-independent protochlorophyllide reductase subunit B (513 aa).

Aspartate 36 is a [4Fe-4S] cluster binding site. Aspartate 299 functions as the Proton donor in the catalytic mechanism. 434 to 435 contacts substrate; sequence GM.

Belongs to the ChlB/BchB/BchZ family. Protochlorophyllide reductase is composed of three subunits; ChlL, ChlN and ChlB. Forms a heterotetramer of two ChlB and two ChlN subunits. The cofactor is [4Fe-4S] cluster.

It localises to the plastid. Its subcellular location is the chloroplast. It catalyses the reaction chlorophyllide a + oxidized 2[4Fe-4S]-[ferredoxin] + 2 ADP + 2 phosphate = protochlorophyllide a + reduced 2[4Fe-4S]-[ferredoxin] + 2 ATP + 2 H2O. Its pathway is porphyrin-containing compound metabolism; chlorophyll biosynthesis (light-independent). Functionally, component of the dark-operative protochlorophyllide reductase (DPOR) that uses Mg-ATP and reduced ferredoxin to reduce ring D of protochlorophyllide (Pchlide) to form chlorophyllide a (Chlide). This reaction is light-independent. The NB-protein (ChlN-ChlB) is the catalytic component of the complex. The sequence is that of Light-independent protochlorophyllide reductase subunit B from Anthoceros angustus (Hornwort).